A 145-amino-acid polypeptide reads, in one-letter code: Probable inactive ribonuclease-like protein 12 (145 aa).

The signal sequence occupies residues 1 to 19 (MVLMVVVFLLLLFWENELT).

This sequence belongs to the pancreatic ribonuclease family.

The protein localises to the secreted. Its function is as follows. Does not exhibit any ribonuclease activity. The chain is Probable inactive ribonuclease-like protein 12 (Rnase12) from Mus musculus (Mouse).